The following is a 365-amino-acid chain: Phenoloxidase-activating factor 1 (365 aa).

A signal peptide spans 1-23 (MKQVHFFILWFFVLNLYSIKAQA). Residues 24-74 (GCRTPNGENARCVPINNCKILYDSVLTSDPEVIRFLRASQCGYNGQPLVCC) form the Clip domain. 8 disulfides stabilise this stretch: cysteine 25-cysteine 73, cysteine 35-cysteine 64, cysteine 41-cysteine 74, cysteine 101-cysteine 240, cysteine 140-cysteine 156, cysteine 184-cysteine 191, cysteine 284-cysteine 301, and cysteine 311-cysteine 340. One can recognise a Peptidase S1 domain in the interval 110–364 (ILNGDDTVPE…YRDWIEGNIR (255 aa)). Asparagine 131 carries an N-linked (GlcNAc...) asparagine glycan. Catalysis depends on histidine 155, which acts as the Charge relay system. Ca(2+) contacts are provided by glutamate 175, asparagine 177, threonine 180, and aspartate 183. Aspartate 220 acts as the Charge relay system in catalysis. Serine 315 functions as the Charge relay system in the catalytic mechanism.

The protein belongs to the peptidase S1 family. CLIP subfamily. In terms of assembly, in the active form, heterodimer of a light chain and a heavy chain; disulfide-linked. In terms of processing, cleaved following the recognition of pathogen-derived products, probably by a lysyl endopeptidase.

The protein localises to the secreted. Protein stability and endopeptidase activity are calcium dependent. First cleavage on prophenoloxidase PPO1 and PPO2 is not dependent on calcium; however, cleavage of PPO1 and PPO2 to their active forms is dependent on calcium and on the presence of PPAF2 and PPAF3. Cleavage of PPAF2 is inhibited by calcium. Inhibited by ethylenediaminetetraacetic acid (EDTA), p-nitrophenyl-p'-guanido-benzoate, diisopropylphosphorofluoridate (iPr2PF) and p-(Amidinophenyl)methanesulfonyl fluoride (p-APMSF). Functionally, serine endopeptidase which, by cleaving prophenoloxidase PPO1 and PPO2, is required for the activation of the prophenoloxidase cascade probably following the recognition of pathogen-derived products. The protein is Phenoloxidase-activating factor 1 of Holotrichia diomphalia (Korean black chafer).